We begin with the raw amino-acid sequence, 96 residues long: Protein CLAVATA 3 (96 aa).

The signal sequence occupies residues 1–21; sequence MDSKSFLLLLLLFCFLFLHDA. The disordered stretch occupies residues 68 to 96; sequence ELRTVPSGPDPLHHHVNPPRQPRNNFQLP. Hydroxyproline is present on residues proline 73 and proline 76. O-linked (Ara...) hydroxyproline glycosylation is present at proline 76.

This sequence belongs to the CLV3/ESR signal peptide family. As to quaternary structure, interacts with the extracellular leucine-rich repeat region of CLV1. Interacts with CLV2. CLV3-derived CLE peptides interacts with a tetrameric complex made of two CLV2/CRN heterodimers. Post-translationally, the MCLV3 peptide contains two hydroxyprolines, but hydroxylation had no direct effect on MCLV3 activity. The O-glycosylation (arabinosylation) of the hydroxyproline P-76 enhances binding affinity of the MCLV3 peptide for its receptor. As to expression, first detected in heart stage embryos in a patch of cells between the developing cotyledons. In vegetative and inflorescence meristems, expressed in a small cone of cells at the meristem apex.

The protein localises to the secreted. Its subcellular location is the extracellular space. Extracellular signal that regulates meristem maintenance. Acts with CLV1 as a ligand-receptor pair in a signal transduction pathway coordinating growth between adjacent meristematic regions and controlling the balance between meristem cell proliferation and differentiation. Functionally, the secreted peptide MCLV3 activates a signal transduction cascade to restrict WUSCHEL (WUS) expression, inducing shoot and root meristem consumption as cells differentiated into other organs. In Arabidopsis thaliana (Mouse-ear cress), this protein is Protein CLAVATA 3.